The following is a 114-amino-acid chain: Large ribosomal subunit protein uL22 (114 aa).

The protein belongs to the universal ribosomal protein uL22 family. As to quaternary structure, part of the 50S ribosomal subunit.

Its function is as follows. This protein binds specifically to 23S rRNA; its binding is stimulated by other ribosomal proteins, e.g. L4, L17, and L20. It is important during the early stages of 50S assembly. It makes multiple contacts with different domains of the 23S rRNA in the assembled 50S subunit and ribosome. The globular domain of the protein is located near the polypeptide exit tunnel on the outside of the subunit, while an extended beta-hairpin is found that lines the wall of the exit tunnel in the center of the 70S ribosome. This chain is Large ribosomal subunit protein uL22, found in Lysinibacillus sphaericus (strain C3-41).